The chain runs to 671 residues: tRNA 5-methylaminomethyl-2-thiouridine biosynthesis bifunctional protein MnmC (671 aa).

Residues 1–245 (MVNVMNTLSF…KREMLWGEKP (245 aa)) are tRNA (mnm(5)s(2)U34)-methyltransferase. The FAD-dependent cmnm(5)s(2)U34 oxidoreductase stretch occupies residues 272 to 671 (VGGGVASLFV…RKLLKGSKVE (400 aa)).

In the N-terminal section; belongs to the methyltransferase superfamily. tRNA (mnm(5)s(2)U34)-methyltransferase family. This sequence in the C-terminal section; belongs to the DAO family. FAD is required as a cofactor.

It localises to the cytoplasm. It catalyses the reaction 5-aminomethyl-2-thiouridine(34) in tRNA + S-adenosyl-L-methionine = 5-methylaminomethyl-2-thiouridine(34) in tRNA + S-adenosyl-L-homocysteine + H(+). In terms of biological role, catalyzes the last two steps in the biosynthesis of 5-methylaminomethyl-2-thiouridine (mnm(5)s(2)U) at the wobble position (U34) in tRNA. Catalyzes the FAD-dependent demodification of cmnm(5)s(2)U34 to nm(5)s(2)U34, followed by the transfer of a methyl group from S-adenosyl-L-methionine to nm(5)s(2)U34, to form mnm(5)s(2)U34. The sequence is that of tRNA 5-methylaminomethyl-2-thiouridine biosynthesis bifunctional protein MnmC from Actinobacillus pleuropneumoniae serotype 3 (strain JL03).